A 44-amino-acid chain; its full sequence is Endochitinase 1 (44 aa).

It belongs to the glycosyl hydrolase 19 family. Chitinase class I subfamily.

It catalyses the reaction Random endo-hydrolysis of N-acetyl-beta-D-glucosaminide (1-&gt;4)-beta-linkages in chitin and chitodextrins.. Functionally, defense against chitin-containing fungal pathogens. In Capsicum chinense (Scotch bonnet), this protein is Endochitinase 1.